Reading from the N-terminus, the 1702-residue chain is Dicer-like protein 4 (1702 aa).

2 disordered regions span residues 1-52 (MRDE…SAAT) and 89-120 (SSSS…EKDP). Residues 17–31 (GKRDREQKNCEEEKN) are compositionally biased toward basic and acidic residues. Low complexity predominate over residues 89–105 (SSSSVSSFSSSSSSLFS). One can recognise a Helicase ATP-binding domain in the interval 131-307 (LCKKATEENV…SENLSKSINS (177 aa)). ATP is bound at residue 144–151 (LGTGCGKT). The DECH box motif lies at 251 to 254 (DECH). A Helicase C-terminal domain is found at 475–629 (QLIKILSVFR…RMNLEITYRS (155 aa)). One can recognise a Dicer dsRNA-binding fold domain in the interval 656–748 (SISLLYKYCS…LPDSKDEIED (93 aa)). The PAZ domain maps to 932-1054 (LVEDIFPPSG…IPPELSHLKI (123 aa)). RNase III domains are found at residues 1083–1251 (ELKH…VDSG) and 1292–1436 (LETL…LDCG). Mg(2+)-binding residues include Glu1330, Asp1422, and Glu1425. DRBM domains lie at 1462–1528 (SPIK…NLKA) and 1621–1697 (TAKS…CLKH).

The protein belongs to the helicase family. Dicer subfamily. As to quaternary structure, interacts with DRB4. Mg(2+) serves as cofactor. The cofactor is Mn(2+).

It is found in the nucleus. Its function is as follows. Ribonuclease (RNase) III involved in RNA-mediated post-transcriptional gene silencing (PTGS). Functions in the biogenesis of trans-acting small interfering RNAs (ta-siRNAs, derived from the TAS1, TAS2 or TAS3 endogenous transcripts) by cleaving small dsRNAs into 21-24 nucleotide ta-siRNAs. Functions with the dsRNA-binding protein DRB4 in ta-siRNAs processing. Acts in the RDR6/SGS3/DCL4/AGO7 ta-siRNA pathway involved in leaf developmental timing. Plays a role in transitive silencing of transgenes by processing secondary siRNAs. This pathway, which requires DCL2 and RDR6, amplifies silencing by using the target RNA as substrate to generate secondary siRNAs, providing an efficient mechanism for long-distance silencing. Required for the production of the 30-40 nucleotide bacterial-induced long siRNAs (lsiRNA). May participate with DCL3 in the production of 24 nucleotide repeat-associated siRNAs (ra-siRNAs) which derive from heterochromatin and DNA repeats such as transposons. Plays an important role in antiviral RNA silencing. Involved in the production of viral siRNAs derived from the cucumber mosaic virus (CMV), turnip crinkle virus (TCV) and tobacco rattle virus (TRV). Targeted by the viral silencing suppressor (VSR) protein 2b of the cucumber mosaic virus (CMV) that inactivates DCL4 function in RNA silencing. Does not seem to be involved in microRNAs (miRNAs) processing. The chain is Dicer-like protein 4 (DCL4) from Arabidopsis thaliana (Mouse-ear cress).